A 553-amino-acid polypeptide reads, in one-letter code: Protein spartin (553 aa).

One can recognise an MIT domain in the interval isoleucine 15–valine 96. Residues aspartate 105–asparagine 130 are disordered. Basic and acidic residues predominate over residues glutamate 113–arginine 123. Residues isoleucine 325 to lysine 509 enclose the Senescence domain.

Interacts with Eps-15 (via C-terminal region); the interaction is required for spartin localization to the NMJ presynaptic membrane. Expressed in larval brain, ventral nerve cord and neuropil (at protein level).

The protein resides in the presynaptic cell membrane. It is found in the early endosome. It localises to the lipid droplet. During postembryonic development, functions with endocytic adapter Eps-15 in neurons to restrain synaptic growth, by inhibiting BMP signaling, and to control synaptic endocytosis. Required presynaptically for neuromuscular junction (NMJ) neurotransmission. Inhibits neuronal BMP signaling by promoting endocytic internalization and subsequent endosomal trafficking of the BMP receptor wit. In this way, regulates the Fmr1 translational regulator controlling Futsch expression to modulate neuronal microtubule stability, which controls both synaptogenesis and neuronal survival. The sequence is that of Protein spartin from Drosophila melanogaster (Fruit fly).